A 437-amino-acid polypeptide reads, in one-letter code: MGQGVSSGQDKKKKKGSNQKPKYEPPVQSKFGRKKRKGGPATAEKLPNIYPSTRCKLKLLRMERIKDHLLLEEEFVSNSEILKPFEKKQEEEKKQLEEIRGNPLSIGTLEEIIDDDHAIVTSPTMPDYYVSILSFVDKELLEPGCSVLLHHKTMSIVGVLQDDADPMVSVMKMDKSPTESYSDIGGLESQIQEIKESVELPLTHPELYEEMGIKPPKGVILYGAPGTGKTLLAKAVANQTSATFLRIVGSELIQKYLGDGPRLCRQIFKVAGENAPSIVFIDEIDAIGTKRYDSNSGGEREIQRTMLELLNQLDGFDDRGDVKVIMATNKIETLDPALIRPGRIDRKILFENPDLSTKKKILGIHTSKMNLSEDVNLETLVTTKDDLSGADIQAMCTEAGLLALRERRMQVTAEDFKQAKERVMKNKVEENLEGLYL.

Residues 1-47 (MGQGVSSGQDKKKKKGSNQKPKYEPPVQSKFGRKKRKGGPATAEKLP) are disordered. G2 is lipidated: N-myristoyl glycine. ATP is bound at residue 223–230 (GAPGTGKT). Residues K234, K255, and K290 each participate in a glycyl lysine isopeptide (Lys-Gly) (interchain with G-Cter in ubiquitin) cross-link.

The protein belongs to the AAA ATPase family.

The protein resides in the cytoplasm. The protein localises to the nucleus. Its function is as follows. The 26S proteasome is involved in the ATP-dependent degradation of ubiquitinated proteins. The regulatory (or ATPase) complex confers ATP dependency and substrate specificity to the 26S complex. Has ATPase activity. The chain is 26S proteasome regulatory subunit 4 homolog (RPT2) from Saccharomyces cerevisiae (strain ATCC 204508 / S288c) (Baker's yeast).